The primary structure comprises 389 residues: Na(+)/H(+) antiporter NhaA (389 aa).

11 consecutive transmembrane segments (helical) span residues 14 to 34 (AGGI…NSPL), 59 to 79 (LLLW…GLEV), 95 to 115 (SLPS…YLLF), 124 to 144 (AGWA…MALL), 154 to 174 (VFLL…IALF), 177 to 197 (SDLS…LVGL), 213 to 233 (LILW…GVII), 261 to 281 (FLIL…NMSL), 290 to 310 (IGIA…FSFI), 328 to 348 (IAPV…IASL), and 363 to 383 (LGTL…LSKV).

This sequence belongs to the NhaA Na(+)/H(+) (TC 2.A.33) antiporter family.

The protein resides in the cell inner membrane. It carries out the reaction Na(+)(in) + 2 H(+)(out) = Na(+)(out) + 2 H(+)(in). Functionally, na(+)/H(+) antiporter that extrudes sodium in exchange for external protons. This Shewanella sp. (strain W3-18-1) protein is Na(+)/H(+) antiporter NhaA.